The chain runs to 823 residues: Dimethyl sulfoxide/trimethylamine N-oxide reductase (823 aa).

Positions 1-42 (MTKFSGNELRAELYRRAFLSYSVAPGALGMFGRSLLAKGARA) form a signal peptide, tat-type signal. Mo-bis(molybdopterin guanine dinucleotide) contacts are provided by residues 156-160 (YGWKS), Trp-158, Ser-189, 232-233 (KT), 262-263 (ID), 283-285 (QTD), 364-365 (WS), Arg-368, Asn-476, His-480, 500-501 (HD), Arg-523, Asp-553, 685-686 (HP), 691-693 (HSQ), Asn-779, and 796-797 (GQ).

As to quaternary structure, homodimer. Mo-bis(molybdopterin guanine dinucleotide) is required as a cofactor. Post-translationally, predicted to be exported by the Tat system. The position of the signal peptide cleavage has been experimentally proven.

The protein resides in the periplasm. It carries out the reaction dimethyl sulfide + a menaquinone + H2O = dimethyl sulfoxide + a menaquinol. It catalyses the reaction trimethylamine + 2 Fe(III)-[cytochrome c] + H2O = trimethylamine N-oxide + 2 Fe(II)-[cytochrome c] + 3 H(+). Its function is as follows. Catalyzes the reduction of dimethyl sulfoxide (DMSO) and trimethylamine N-oxide (TMAO) to dimethyl sulfide (DMS) and trimethylamine, respectively. The terminal DMSO reductase can also use various sulfoxides and N-oxide compounds as terminal electron acceptor in addition to DMSO and TMAO. The sequence is that of Dimethyl sulfoxide/trimethylamine N-oxide reductase (dorA) from Rhodobacter capsulatus (Rhodopseudomonas capsulata).